Consider the following 293-residue polypeptide: Amine sulfotransferase (293 aa).

46–51 (KSGTIW) contacts 3'-phosphoadenylyl sulfate. His-101 (proton acceptor) is an active-site residue. 3'-phosphoadenylyl sulfate is bound by residues Arg-123, Ser-131, 220–225 (ATFQKM), and 252–254 (RKG).

The protein belongs to the sulfotransferase 1 family.

The protein localises to the cytoplasm. It catalyses the reaction a primary amine + 3'-phosphoadenylyl sulfate = a sulfamate + adenosine 3',5'-bisphosphate + 2 H(+). In terms of biological role, sulfotransferase that utilizes 3'-phospho-5'-adenylyl sulfate (PAPS) as sulfonate donor to catalyze the N-sulfonation of amines. This is Amine sulfotransferase (Sult3a1) from Mus musculus (Mouse).